The following is a 246-amino-acid chain: UDP-N-acetyl-D-mannosaminuronic acid transferase (246 aa).

Belongs to the glycosyltransferase 26 family.

It carries out the reaction UDP-N-acetyl-alpha-D-mannosaminouronate + N-acetyl-alpha-D-glucosaminyl-di-trans,octa-cis-undecaprenyl diphosphate = beta-D-ManNAcA-(1-&gt;4)-alpha-D-GlcNAc-di-trans,octa-cis-undecaprenyl diphosphate + UDP + H(+). Its pathway is bacterial outer membrane biogenesis; enterobacterial common antigen biosynthesis. Its function is as follows. Catalyzes the synthesis of Und-PP-GlcNAc-ManNAcA (Lipid II), the second lipid-linked intermediate involved in enterobacterial common antigen (ECA) synthesis. This is UDP-N-acetyl-D-mannosaminuronic acid transferase from Klebsiella pneumoniae (strain 342).